The chain runs to 550 residues: Hydroxylamine reductase (550 aa).

Positions 3, 6, 18, and 25 each coordinate [2Fe-2S] cluster. Hybrid [4Fe-2O-2S] cluster-binding residues include histidine 249, glutamate 273, cysteine 317, cysteine 405, cysteine 433, cysteine 458, glutamate 492, and lysine 494. Residue cysteine 405 is modified to Cysteine persulfide.

This sequence belongs to the HCP family. [2Fe-2S] cluster serves as cofactor. The cofactor is hybrid [4Fe-2O-2S] cluster.

It is found in the cytoplasm. The catalysed reaction is A + NH4(+) + H2O = hydroxylamine + AH2 + H(+). Functionally, catalyzes the reduction of hydroxylamine to form NH(3) and H(2)O. This chain is Hydroxylamine reductase, found in Escherichia coli O6:K15:H31 (strain 536 / UPEC).